A 1422-amino-acid polypeptide reads, in one-letter code: Cardiac-enriched FHL2-interacting protein (1422 aa).

Positions 1–23 (MQGNKKCADGFSDTSSIGSVLDE) are disordered. Phosphothreonine is present on Thr-119. Disordered stretches follow at residues 151-177 (RTEA…KFAH), 199-265 (AGVS…GRGK), 279-443 (SAFE…SSPF), 459-500 (LETS…KAPS), 516-718 (YSPL…SDSQ), 731-850 (FSTS…TNKH), 877-1127 (VSSE…HLER), 1142-1244 (TGAA…GWEP), and 1353-1422 (RQGS…EGVS). The segment covering 201-210 (VSSTHQSSHQ) has biased composition (polar residues). Composition is skewed to basic and acidic residues over residues 284–298 (WDAH…KDIT) and 305–315 (KAPKHYEDMPL). Position 327 is a phosphoserine (Ser-327). Polar residues predominate over residues 342-351 (SPSGIQSTSG). The segment covering 395-405 (GPHDASEDKKQ) has biased composition (basic and acidic residues). Polar residues predominate over residues 461 to 470 (TSDTQPVETS). A Phosphoserine modification is found at Ser-472. Composition is skewed to basic and acidic residues over residues 481–495 (QEKE…DSYK), 524–537 (GFDE…DGKQ), and 579–588 (PAMDSRESFA). The span at 590-606 (SHPTFSSPSASSKTHFS) shows a compositional bias: low complexity. Basic and acidic residues-rich tracts occupy residues 611-622 (AAERNSHEKEEA), 635-644 (WHPDSRENLP), and 653-675 (CNRD…EKRL). Residues 731 to 744 (FSTSSSDQSFASFE) are compositionally biased toward low complexity. Over residues 790–801 (GVEEHRQKETQR) the composition is skewed to basic and acidic residues. Position 815 is a phosphoserine (Ser-815). The span at 828–839 (ADKDTALSHAKD) shows a compositional bias: basic and acidic residues. Composition is skewed to polar residues over residues 907-926 (SESQ…STEQ) and 944-954 (QDETSQQTRKG). Residues 975 to 991 (ADERLAHEKSRSADSGK) show a composition bias toward basic and acidic residues. The segment covering 1048–1067 (AATSPNPSSLGGSSTCSPAA) has biased composition (polar residues). Residues 1087 to 1099 (PPGPGPWASPGPS) are compositionally biased toward pro residues. The segment covering 1173 to 1184 (RRAKKLASKRRK) has biased composition (basic residues). The span at 1185-1202 (SDQMSEKHTEAWEGKSFT) shows a compositional bias: basic and acidic residues. Residues 1353–1366 (RQGSSHRPQSSQGA) show a composition bias toward polar residues. The span at 1411–1422 (DDLEDFATEGVS) shows a compositional bias: acidic residues.

In terms of assembly, interacts with FHL2.

It localises to the cytoplasm. The protein localises to the myofibril. The protein resides in the sarcomere. It is found in the z line. In terms of biological role, plays an important role in cardiomyocyte hypertrophy via activation of the calcineurin/NFAT signaling pathway. In Rattus norvegicus (Rat), this protein is Cardiac-enriched FHL2-interacting protein.